A 408-amino-acid chain; its full sequence is BRCA1-A complex subunit Abraxas 1 (408 aa).

Positions 7–155 (TAVMSGFVFG…KSTHRLEYAL (149 aa)) constitute an MPN domain. Residues 210 to 273 (ALAEVNRISN…EETGNKVSEA (64 aa)) are a coiled coil. Residues 360-372 (LQLQKQHSQNGDS) are compositionally biased toward polar residues. Residues 360–408 (LQLQKQHSQNGDSEGSDSERPLCNSGTETDGDILESLHMDVSRSKSPIF) are disordered. A Phosphoserine modification is found at S405. The pSXXF motif motif lies at 405–408 (SPIF).

It belongs to the FAM175 family. Abraxas subfamily. In terms of assembly, component of the BRCA1-A complex. Component of the BRISC complex. Interacts directly (when phosphorylated at Ser-405) with brca1. Homodimer. The phosphorylated homodimer can interact directly with two brca1 chains, giving rise to a heterotetramer. Phosphorylation of Ser-405 of the pSXXF motif by ATM or ATR constitutes a specific recognition motif for the BRCT domain of BRCA1.

It is found in the nucleus. Functionally, involved in DNA damage response and double-strand break (DSB) repair. Component of the BRCA1-A complex, acting as a central scaffold protein that assembles the various components of the complex and mediates the recruitment of brca1. The BRCA1-A complex specifically recognizes 'Lys-63'-linked ubiquitinated histones H2A and H2AX at DNA lesion sites, leading to target the brca1-bard1 heterodimer to sites of DNA damage at DSBs. This complex also possesses deubiquitinase activity that specifically removes 'Lys-63'-linked ubiquitin on histones H2A and H2AX. In Xenopus tropicalis (Western clawed frog), this protein is BRCA1-A complex subunit Abraxas 1.